The chain runs to 373 residues: Nuclear hormone receptor family member nhr-69 (373 aa).

Positions 3–78 form a DNA-binding region, nuclear receptor; sequence EEICHICNDK…AGMKSNAIQN (76 aa). 2 NR C4-type zinc fingers span residues 6–26 and 42–66; these read CHICNDKSTGKHYGAISCDGC and CRFEQNCDVTKNKRNACRACRLQKC. Residues 93–344 enclose the NR LBD domain; sequence EKEDLIDQLV…SLMEELILND (252 aa).

Belongs to the nuclear hormone receptor family. In terms of assembly, interacts with R-SMAD daf-8. In terms of tissue distribution, expressed in the ASI neurons, hypodermis, and in tail neurons.

It localises to the nucleus. Functionally, orphan nuclear receptor which, in cooperation with R-SMAD daf-8, modulates the Insulin/IGF-1-like signaling (IIS) pathway, perhaps by regulating expression of the potassium channel exp-2, which in turn modulates the secretion of insulin-like peptide daf-28. The chain is Nuclear hormone receptor family member nhr-69 (nhr-69) from Caenorhabditis elegans.